We begin with the raw amino-acid sequence, 334 residues long: Ribosomal RNA small subunit methyltransferase H (334 aa).

S-adenosyl-L-methionine-binding positions include Gly54–His56, Asp74, Phe100, Asp121, and Gln128. The tract at residues Arg272–Leu318 is disordered. Residues Lys289–Gly301 show a composition bias toward basic residues.

Belongs to the methyltransferase superfamily. RsmH family.

It is found in the cytoplasm. The enzyme catalyses cytidine(1402) in 16S rRNA + S-adenosyl-L-methionine = N(4)-methylcytidine(1402) in 16S rRNA + S-adenosyl-L-homocysteine + H(+). In terms of biological role, specifically methylates the N4 position of cytidine in position 1402 (C1402) of 16S rRNA. The protein is Ribosomal RNA small subunit methyltransferase H of Psychrobacter arcticus (strain DSM 17307 / VKM B-2377 / 273-4).